We begin with the raw amino-acid sequence, 85 residues long: Large ribosomal subunit protein bL27 (85 aa).

The segment at 1 to 22 is disordered; it reads MAHKKAGGSTNNGRDSESKRLG.

Belongs to the bacterial ribosomal protein bL27 family.

In Photobacterium profundum (strain SS9), this protein is Large ribosomal subunit protein bL27.